Reading from the N-terminus, the 444-residue chain is Glutamyl-tRNA reductase (444 aa).

Substrate-binding positions include 49 to 52, Ser-109, 114 to 116, and Gln-120; these read TCNR and ETQ. Catalysis depends on Cys-50, which acts as the Nucleophile. Position 189-194 (189-194) interacts with NADP(+); that stretch reads GAGKMG.

The protein belongs to the glutamyl-tRNA reductase family. As to quaternary structure, homodimer.

The enzyme catalyses (S)-4-amino-5-oxopentanoate + tRNA(Glu) + NADP(+) = L-glutamyl-tRNA(Glu) + NADPH + H(+). It participates in porphyrin-containing compound metabolism; protoporphyrin-IX biosynthesis; 5-aminolevulinate from L-glutamyl-tRNA(Glu): step 1/2. In terms of biological role, catalyzes the NADPH-dependent reduction of glutamyl-tRNA(Glu) to glutamate 1-semialdehyde (GSA). This chain is Glutamyl-tRNA reductase, found in Bacillus cereus (strain AH187).